The sequence spans 277 residues: Large ribosomal subunit protein uL2 (277 aa).

Residues 222 to 277 (GVTMNPVDHPHGGGEGRTSGGRHPVTPWGKPTKGKKTRSNKSTNKFILISRHKRKK) form a disordered region.

This sequence belongs to the universal ribosomal protein uL2 family. As to quaternary structure, part of the 50S ribosomal subunit. Forms a bridge to the 30S subunit in the 70S ribosome.

Functionally, one of the primary rRNA binding proteins. Required for association of the 30S and 50S subunits to form the 70S ribosome, for tRNA binding and peptide bond formation. It has been suggested to have peptidyltransferase activity; this is somewhat controversial. Makes several contacts with the 16S rRNA in the 70S ribosome. In Rhodopseudomonas palustris (strain BisB18), this protein is Large ribosomal subunit protein uL2.